We begin with the raw amino-acid sequence, 194 residues long: Granulocyte colony-stimulating factor (194 aa).

An N-terminal signal peptide occupies residues 1–20 (KLMALQLLLWHSALWMVQEA). 2 disulfides stabilise this stretch: Cys56–Cys62 and Cys84–Cys94. O-linked (GalNAc...) threonine glycosylation occurs at Thr153.

The protein belongs to the IL-6 superfamily. In terms of assembly, monomer. Post-translationally, O-glycosylated.

The protein localises to the secreted. Its function is as follows. Granulocyte/macrophage colony-stimulating factors are cytokines that act in hematopoiesis by controlling the production, differentiation, and function of 2 related white cell populations of the blood, the granulocytes and the monocytes-macrophages. This CSF induces granulocytes. The protein is Granulocyte colony-stimulating factor (CSF3) of Felis catus (Cat).